The chain runs to 187 residues: NADH-quinone oxidoreductase subunit B (187 aa).

Residues Met-1–His-10 show a composition bias toward basic and acidic residues. A disordered region spans residues Met-1 to Gln-22. The [4Fe-4S] cluster site is built by Cys-66, Cys-67, Cys-131, and Cys-161.

It belongs to the complex I 20 kDa subunit family. As to quaternary structure, NDH-1 is composed of 14 different subunits. Subunits NuoB, C, D, E, F, and G constitute the peripheral sector of the complex. [4Fe-4S] cluster serves as cofactor.

The protein localises to the cell inner membrane. The catalysed reaction is a quinone + NADH + 5 H(+)(in) = a quinol + NAD(+) + 4 H(+)(out). In terms of biological role, NDH-1 shuttles electrons from NADH, via FMN and iron-sulfur (Fe-S) centers, to quinones in the respiratory chain. Couples the redox reaction to proton translocation (for every two electrons transferred, four hydrogen ions are translocated across the cytoplasmic membrane), and thus conserves the redox energy in a proton gradient. This chain is NADH-quinone oxidoreductase subunit B, found in Erythrobacter litoralis (strain HTCC2594).